We begin with the raw amino-acid sequence, 431 residues long: Histidinol dehydrogenase (431 aa).

NAD(+) contacts are provided by Y127, Q185, and N208. Substrate is bound by residues S234, Q256, and H259. Zn(2+) is bound by residues Q256 and H259. Catalysis depends on proton acceptor residues E323 and H324. Substrate-binding residues include H324, D357, E411, and H416. Position 357 (D357) interacts with Zn(2+). Zn(2+) is bound at residue H416.

It belongs to the histidinol dehydrogenase family. It depends on Zn(2+) as a cofactor.

The enzyme catalyses L-histidinol + 2 NAD(+) + H2O = L-histidine + 2 NADH + 3 H(+). It functions in the pathway amino-acid biosynthesis; L-histidine biosynthesis; L-histidine from 5-phospho-alpha-D-ribose 1-diphosphate: step 9/9. Its function is as follows. Catalyzes the sequential NAD-dependent oxidations of L-histidinol to L-histidinaldehyde and then to L-histidine. In Vibrio vulnificus (strain YJ016), this protein is Histidinol dehydrogenase.